The sequence spans 532 residues: Probable alpha-galactosidase A (532 aa).

The first 21 residues, 1–21 (MDTTKSLLSTLIAIMIPLSLG), serve as a signal peptide directing secretion. Cysteine 44 and cysteine 76 form a disulfide bridge. Asparagine 47, asparagine 91, and asparagine 121 each carry an N-linked (GlcNAc...) asparagine glycan. Cysteine 124 and cysteine 154 are disulfide-bonded. Aspartate 152 acts as the Nucleophile in catalysis. N-linked (GlcNAc...) asparagine glycosylation is present at asparagine 201. The active-site Proton donor is the aspartate 210. The Ricin B-type lectin domain maps to 410–531 (CSTVIPTGIV…GLPSGVDIKP (122 aa)). 2 cysteine pairs are disulfide-bonded: cysteine 427–cysteine 441 and cysteine 466–cysteine 478.

It belongs to the glycosyl hydrolase 27 family.

It localises to the secreted. It carries out the reaction Hydrolysis of terminal, non-reducing alpha-D-galactose residues in alpha-D-galactosides, including galactose oligosaccharides, galactomannans and galactolipids.. In terms of biological role, hydrolyzes a variety of simple alpha-D-galactoside as well as more complex molecules such as oligosaccharides and polysaccharides. The protein is Probable alpha-galactosidase A (aglA) of Aspergillus fumigatus (strain ATCC MYA-4609 / CBS 101355 / FGSC A1100 / Af293) (Neosartorya fumigata).